The following is a 368-amino-acid chain: Histidinol-phosphate aminotransferase (368 aa).

Position 229 is an N6-(pyridoxal phosphate)lysine (lysine 229).

It belongs to the class-II pyridoxal-phosphate-dependent aminotransferase family. Histidinol-phosphate aminotransferase subfamily. In terms of assembly, homodimer. Pyridoxal 5'-phosphate serves as cofactor.

It catalyses the reaction L-histidinol phosphate + 2-oxoglutarate = 3-(imidazol-4-yl)-2-oxopropyl phosphate + L-glutamate. Its pathway is amino-acid biosynthesis; L-histidine biosynthesis; L-histidine from 5-phospho-alpha-D-ribose 1-diphosphate: step 7/9. This chain is Histidinol-phosphate aminotransferase, found in Acidovorax sp. (strain JS42).